Reading from the N-terminus, the 292-residue chain is ATP synthase gamma chain (292 aa).

This sequence belongs to the ATPase gamma chain family. As to quaternary structure, F-type ATPases have 2 components, CF(1) - the catalytic core - and CF(0) - the membrane proton channel. CF(1) has five subunits: alpha(3), beta(3), gamma(1), delta(1), epsilon(1). CF(0) has three main subunits: a, b and c.

The protein resides in the cell inner membrane. Produces ATP from ADP in the presence of a proton gradient across the membrane. The gamma chain is believed to be important in regulating ATPase activity and the flow of protons through the CF(0) complex. This is ATP synthase gamma chain from Brucella anthropi (strain ATCC 49188 / DSM 6882 / CCUG 24695 / JCM 21032 / LMG 3331 / NBRC 15819 / NCTC 12168 / Alc 37) (Ochrobactrum anthropi).